Consider the following 335-residue polypeptide: MEPRRMADSLRYVLMGTGPFAVPSFEAIRQQMDSTGDQIARVFVRPLPPVKSRGGPPPQPVREWAESHGLPVDAPASINDPETIASLTELNADLLVVCDYGQILKPDALQSARLGGINLHGSLLPAYRGAAPVQRALLSGDRETGVSVIHMTPRLDGGPIVASRTTPIRDDETSGELEVRLSEIGVDATREAIGLLRTIESLDSHGPLGEPQDPAKVSKAPRLSKAEAQIDWSATGREIDCLVRGMQPWPVAFTHTVVNENKPPLRVAIRGVRTETYAADASNIGRVMEHEGLAIGCGDGQVVIERLQPAGKKEMSGLDFKRGHRLTAGQQLIAP.

Residue serine 122–proline 125 participates in (6S)-5,6,7,8-tetrahydrofolate binding. Residues aspartate 203 to arginine 222 form a disordered region.

Belongs to the Fmt family.

It catalyses the reaction L-methionyl-tRNA(fMet) + (6R)-10-formyltetrahydrofolate = N-formyl-L-methionyl-tRNA(fMet) + (6S)-5,6,7,8-tetrahydrofolate + H(+). In terms of biological role, attaches a formyl group to the free amino group of methionyl-tRNA(fMet). The formyl group appears to play a dual role in the initiator identity of N-formylmethionyl-tRNA by promoting its recognition by IF2 and preventing the misappropriation of this tRNA by the elongation apparatus. The sequence is that of Methionyl-tRNA formyltransferase from Rhodopirellula baltica (strain DSM 10527 / NCIMB 13988 / SH1).